Reading from the N-terminus, the 291-residue chain is 4-diphosphocytidyl-2-C-methyl-D-erythritol kinase (291 aa).

Residue Lys11 is part of the active site. 97-107 serves as a coordination point for ATP; the sequence is PVAAGIGGGSS. Residue Asp139 is part of the active site.

The protein belongs to the GHMP kinase family. IspE subfamily.

It catalyses the reaction 4-CDP-2-C-methyl-D-erythritol + ATP = 4-CDP-2-C-methyl-D-erythritol 2-phosphate + ADP + H(+). Its pathway is isoprenoid biosynthesis; isopentenyl diphosphate biosynthesis via DXP pathway; isopentenyl diphosphate from 1-deoxy-D-xylulose 5-phosphate: step 3/6. In terms of biological role, catalyzes the phosphorylation of the position 2 hydroxy group of 4-diphosphocytidyl-2C-methyl-D-erythritol. In Methylorubrum extorquens (strain CM4 / NCIMB 13688) (Methylobacterium extorquens), this protein is 4-diphosphocytidyl-2-C-methyl-D-erythritol kinase.